The following is a 199-amino-acid chain: Recombination protein RecR (199 aa).

The segment at 58-73 (CKKCFNLTSEDECEIC) adopts a C4-type zinc-finger fold. The Toprim domain maps to 81-175 (KLICVVAETK…KVTRIAYGLP (95 aa)).

The protein belongs to the RecR family.

Its function is as follows. May play a role in DNA repair. It seems to be involved in an RecBC-independent recombinational process of DNA repair. It may act with RecF and RecO. In Prochlorococcus marinus (strain MIT 9301), this protein is Recombination protein RecR.